The sequence spans 171 residues: UPF0398 protein M6_Spy1399 (171 aa).

It belongs to the UPF0398 family.

In Streptococcus pyogenes serotype M6 (strain ATCC BAA-946 / MGAS10394), this protein is UPF0398 protein M6_Spy1399.